The chain runs to 620 residues: MVKETPLHSSSSTSLSSLFRPTKLKNLSAKIFNGGGNQSYSKTDDVSRSSSRSSKKNTDSDQEDQIKYNKPNDRRSTIGKSPQGNGALSKESHVVASSTLTGISPTSAKKAPIDYSPSRPLPNNHNPVRTGHTVPHLPHSIHNPINYIHQGSKDAFHHPHPVRSTAHSNISTVSSAKSDTPSSNLSYQAHMHPVEILQKQIEDKHFMDSQASTPGSVELQHNSSSGSDDTSSRKKKSLRLTRFFKKIHNDYHDNHHHHHHHNRGSTPTKPKLNLNTNENIVESNGKALYETDNPVELLEKYGIPGRKLGEGASGSVSVVERTDGKLFACKMFRKPHLNNEGTNQSQLANYSKKVTTEFCIGSTLHHENIVETLDMLTEGDTYLLVMEYAPYDFFNLVMSNLMTQDEVNCYFKQLCHGVNYLHSMGLAHRDLKLDNCVVTKDGILKLIDFGSAVVFQYPYEDTIVKSHGIVGSDPYLAPELLKQTSYDPRVADVWSIAIIFYCMVLKRFPWKAPKKSFNSFRLFTEEPEDEDDIVRGPNKILRLLPRHSRTIIGRMLALEPKQRVLMNDVVKDDWLVSVPSCEVDPTSGDLVEKPKNHKHHLVTEEELNELTKQHGNKDSN.

5 disordered regions span residues 1–20 (MVKE…SLFR), 29–130 (AKIF…PVRT), 153–186 (KDAF…SNLS), 210–237 (QAST…KKKS), and 252–271 (HDNH…TKPK). The span at 7-18 (LHSSSSTSLSSL) shows a compositional bias: low complexity. A compositionally biased stretch (basic and acidic residues) spans 56–76 (KNTDSDQEDQIKYNKPNDRRS). Thr58 is modified (phosphothreonine). The residue at position 60 (Ser60) is a Phosphoserine. Polar residues-rich tracts occupy residues 95–107 (VASS…SPTS), 165–186 (TAHS…SNLS), and 210–222 (QAST…LQHN). A Phosphoserine modification is found at Ser216. Residues 254-263 (NHHHHHHHNR) are compositionally biased toward basic residues. A Protein kinase domain is found at 302–575 (GIPGRKLGEG…MNDVVKDDWL (274 aa)). Residues 308 to 316 (LGEGASGSV) and Lys330 contribute to the ATP site. Lys334 participates in a covalent cross-link: Glycyl lysine isopeptide (Lys-Gly) (interchain with G-Cter in ubiquitin). The active-site Proton acceptor is Asp430.

The protein belongs to the protein kinase superfamily. Ser/Thr protein kinase family. Interacts with ribosome biogenesis factors ARC1, CKA2 and GUS1.

The catalysed reaction is L-seryl-[protein] + ATP = O-phospho-L-seryl-[protein] + ADP + H(+). It catalyses the reaction L-threonyl-[protein] + ATP = O-phospho-L-threonyl-[protein] + ADP + H(+). Probable serine/threonine-protein kinase that may be involved in ribosome biogenesis. The sequence is that of Probable serine/threonine-protein kinase RTK1 (RTK1) from Saccharomyces cerevisiae (strain ATCC 204508 / S288c) (Baker's yeast).